The sequence spans 271 residues: Bis(5'-nucleosyl)-tetraphosphatase, symmetrical (271 aa).

It belongs to the Ap4A hydrolase family.

It carries out the reaction P(1),P(4)-bis(5'-adenosyl) tetraphosphate + H2O = 2 ADP + 2 H(+). Its function is as follows. Hydrolyzes diadenosine 5',5'''-P1,P4-tetraphosphate to yield ADP. The polypeptide is Bis(5'-nucleosyl)-tetraphosphatase, symmetrical (Aliivibrio fischeri (strain MJ11) (Vibrio fischeri)).